The following is a 161-amino-acid chain: Protein-export protein SecB (161 aa).

Belongs to the SecB family. As to quaternary structure, homotetramer, a dimer of dimers. One homotetramer interacts with 1 SecA dimer.

Its subcellular location is the cytoplasm. In terms of biological role, one of the proteins required for the normal export of preproteins out of the cell cytoplasm. It is a molecular chaperone that binds to a subset of precursor proteins, maintaining them in a translocation-competent state. It also specifically binds to its receptor SecA. The protein is Protein-export protein SecB of Afipia carboxidovorans (strain ATCC 49405 / DSM 1227 / KCTC 32145 / OM5) (Oligotropha carboxidovorans).